Consider the following 616-residue polypeptide: Dihydroxy-acid dehydratase (616 aa).

Residue Asp-81 coordinates Mg(2+). Cys-122 serves as a coordination point for [2Fe-2S] cluster. Residues Asp-123 and Lys-124 each contribute to the Mg(2+) site. Residue Lys-124 is modified to N6-carboxylysine. A [2Fe-2S] cluster-binding site is contributed by Cys-195. Glu-491 lines the Mg(2+) pocket. Ser-517 serves as the catalytic Proton acceptor.

The protein belongs to the IlvD/Edd family. Homodimer. The cofactor is [2Fe-2S] cluster. Requires Mg(2+) as cofactor.

The enzyme catalyses (2R)-2,3-dihydroxy-3-methylbutanoate = 3-methyl-2-oxobutanoate + H2O. It carries out the reaction (2R,3R)-2,3-dihydroxy-3-methylpentanoate = (S)-3-methyl-2-oxopentanoate + H2O. Its pathway is amino-acid biosynthesis; L-isoleucine biosynthesis; L-isoleucine from 2-oxobutanoate: step 3/4. It functions in the pathway amino-acid biosynthesis; L-valine biosynthesis; L-valine from pyruvate: step 3/4. In terms of biological role, functions in the biosynthesis of branched-chain amino acids. Catalyzes the dehydration of (2R,3R)-2,3-dihydroxy-3-methylpentanoate (2,3-dihydroxy-3-methylvalerate) into 2-oxo-3-methylpentanoate (2-oxo-3-methylvalerate) and of (2R)-2,3-dihydroxy-3-methylbutanoate (2,3-dihydroxyisovalerate) into 2-oxo-3-methylbutanoate (2-oxoisovalerate), the penultimate precursor to L-isoleucine and L-valine, respectively. This is Dihydroxy-acid dehydratase from Pectobacterium atrosepticum (strain SCRI 1043 / ATCC BAA-672) (Erwinia carotovora subsp. atroseptica).